The sequence spans 76 residues: Protein sigN132 (76 aa).

The span at 1 to 13 shows a compositional bias: polar residues; sequence MLFESISTLSNLK. Residues 1–33 are disordered; that stretch reads MLFESISTLSNLKSASKSSMIASTGSTSSKSSN. A compositionally biased stretch (low complexity) spans 14–33; that stretch reads SASKSSMIASTGSTSSKSSN.

This Dictyostelium discoideum (Social amoeba) protein is Protein sigN132.